The following is a 156-amino-acid chain: Small ribosomal subunit protein uS7 (156 aa).

It belongs to the universal ribosomal protein uS7 family. As to quaternary structure, part of the 30S ribosomal subunit. Contacts proteins S9 and S11.

One of the primary rRNA binding proteins, it binds directly to 16S rRNA where it nucleates assembly of the head domain of the 30S subunit. Is located at the subunit interface close to the decoding center, probably blocks exit of the E-site tRNA. The protein is Small ribosomal subunit protein uS7 of Pseudomonas syringae pv. syringae (strain B728a).